A 400-amino-acid polypeptide reads, in one-letter code: Sensory histidine kinase/phosphatase NtrB (400 aa).

2 stretches are compositionally biased toward low complexity: residues 1 to 10 (MARASAAAPL) and 18 to 27 (RAPSSSYRPV). The segment at 1-27 (MARASAAAPLPRRPARPRAPSSSYRPV) is disordered. One can recognise a PAS domain in the interval 29–99 (PCIDPSVMLN…IEQVQQGRHR (71 aa)). Residues 163-381 (MLGHEVKNPL…VFKVSLPMFD (219 aa)) enclose the Histidine kinase domain. A Phosphohistidine; by autocatalysis modification is found at His166.

Post-translationally, autophosphorylated.

Its subcellular location is the cytoplasm. It carries out the reaction ATP + protein L-histidine = ADP + protein N-phospho-L-histidine.. Its function is as follows. Member of the two-component regulatory system NtrB/NtrC, which controls expression of the nitrogen-regulated (ntr) genes in response to nitrogen limitation. Under conditions of nitrogen limitation, NtrB autophosphorylates and transfers the phosphoryl group to NtrC. In the presence of nitrogen, acts as a phosphatase that dephosphorylates and inactivates NtrC. In Azospirillum brasilense, this protein is Sensory histidine kinase/phosphatase NtrB.